A 505-amino-acid polypeptide reads, in one-letter code: Cysteine--tRNA ligase (505 aa).

Cysteine 33 contributes to the Zn(2+) binding site. Positions 35-45 (PTVYDFAHIGN) match the 'HIGH' region motif. Positions 229, 268, and 272 each coordinate Zn(2+). The 'KMSKS' region signature appears at 301-305 (KMSKS). Position 304 (lysine 304) interacts with ATP.

This sequence belongs to the class-I aminoacyl-tRNA synthetase family. As to quaternary structure, monomer. The cofactor is Zn(2+).

It is found in the cytoplasm. It carries out the reaction tRNA(Cys) + L-cysteine + ATP = L-cysteinyl-tRNA(Cys) + AMP + diphosphate. The protein is Cysteine--tRNA ligase of Brucella anthropi (strain ATCC 49188 / DSM 6882 / CCUG 24695 / JCM 21032 / LMG 3331 / NBRC 15819 / NCTC 12168 / Alc 37) (Ochrobactrum anthropi).